The sequence spans 66 residues: uncharacterized protein (66 aa).

This is an uncharacterized protein from Schizosaccharomyces pombe (strain 972 / ATCC 24843) (Fission yeast).